Reading from the N-terminus, the 328-residue chain is Alcohol-sensitive RING finger protein 1 (328 aa).

The RING-type 1; atypical zinc-finger motif lies at 18–61 (CSICWESMPSGVGRLMPCGHEYHLACIRKWFHLHSGNRSCPVCR). The RING-type 2; atypical zinc-finger motif lies at 129–177 (CGICGEMNGDIDTCCNRCHHMYHHSCLGQLLVEVNAEREQGWSHCIFCY).

Its subcellular location is the cytoplasm. It is found in the nucleus. Functionally, required for tolerance to alcohol. This Eremothecium gossypii (strain ATCC 10895 / CBS 109.51 / FGSC 9923 / NRRL Y-1056) (Yeast) protein is Alcohol-sensitive RING finger protein 1 (ASR1).